The chain runs to 199 residues: 3-isopropylmalate dehydratase small subunit (199 aa).

It belongs to the LeuD family. LeuD type 1 subfamily. In terms of assembly, heterodimer of LeuC and LeuD.

The enzyme catalyses (2R,3S)-3-isopropylmalate = (2S)-2-isopropylmalate. Its pathway is amino-acid biosynthesis; L-leucine biosynthesis; L-leucine from 3-methyl-2-oxobutanoate: step 2/4. Functionally, catalyzes the isomerization between 2-isopropylmalate and 3-isopropylmalate, via the formation of 2-isopropylmaleate. In Tolumonas auensis (strain DSM 9187 / NBRC 110442 / TA 4), this protein is 3-isopropylmalate dehydratase small subunit.